A 570-amino-acid chain; its full sequence is Proline--tRNA ligase (570 aa).

Belongs to the class-II aminoacyl-tRNA synthetase family. ProS type 1 subfamily. As to quaternary structure, homodimer.

Its subcellular location is the cytoplasm. The enzyme catalyses tRNA(Pro) + L-proline + ATP = L-prolyl-tRNA(Pro) + AMP + diphosphate. Functionally, catalyzes the attachment of proline to tRNA(Pro) in a two-step reaction: proline is first activated by ATP to form Pro-AMP and then transferred to the acceptor end of tRNA(Pro). As ProRS can inadvertently accommodate and process non-cognate amino acids such as alanine and cysteine, to avoid such errors it has two additional distinct editing activities against alanine. One activity is designated as 'pretransfer' editing and involves the tRNA(Pro)-independent hydrolysis of activated Ala-AMP. The other activity is designated 'posttransfer' editing and involves deacylation of mischarged Ala-tRNA(Pro). The misacylated Cys-tRNA(Pro) is not edited by ProRS. This Clostridium botulinum (strain Eklund 17B / Type B) protein is Proline--tRNA ligase.